A 441-amino-acid chain; its full sequence is BTB/POZ domain-containing protein At3g05675 (441 aa).

A BTB domain is found at 20–98; the sequence is SDIVVRLRNE…LYVVSDDVHE (79 aa).

It participates in protein modification; protein ubiquitination. In terms of biological role, may act as a substrate-specific adapter of an E3 ubiquitin-protein ligase complex (CUL3-RBX1-BTB) which mediates the ubiquitination and subsequent proteasomal degradation of target proteins. The chain is BTB/POZ domain-containing protein At3g05675 from Arabidopsis thaliana (Mouse-ear cress).